The chain runs to 391 residues: Arginine biosynthesis bifunctional protein ArgJ (391 aa).

The substrate site is built by Thr-149, Lys-172, Thr-183, Glu-263, Asn-386, and Ser-391. The active-site Nucleophile is Thr-183.

Belongs to the ArgJ family. As to quaternary structure, heterotetramer of two alpha and two beta chains.

The protein localises to the cytoplasm. It carries out the reaction N(2)-acetyl-L-ornithine + L-glutamate = N-acetyl-L-glutamate + L-ornithine. The enzyme catalyses L-glutamate + acetyl-CoA = N-acetyl-L-glutamate + CoA + H(+). The protein operates within amino-acid biosynthesis; L-arginine biosynthesis; L-ornithine and N-acetyl-L-glutamate from L-glutamate and N(2)-acetyl-L-ornithine (cyclic): step 1/1. It functions in the pathway amino-acid biosynthesis; L-arginine biosynthesis; N(2)-acetyl-L-ornithine from L-glutamate: step 1/4. Catalyzes two activities which are involved in the cyclic version of arginine biosynthesis: the synthesis of N-acetylglutamate from glutamate and acetyl-CoA as the acetyl donor, and of ornithine by transacetylation between N(2)-acetylornithine and glutamate. The sequence is that of Arginine biosynthesis bifunctional protein ArgJ from Bifidobacterium longum (strain NCC 2705).